The primary structure comprises 181 residues: MVDVKCLSDCKLQNQLEKLGFSPGPILPSTRKLYEKKLVQLLVSPPCAPPVMNGPRELDGAQDSDDSEELNIILQGNIILSTEKSKKLKKWPEASTTKRKAVDTYCLDYKPSKGRRWAARAPSTRITYGTITKERDYCAEDQTIESWREEGFPVGLKLAVLGIFIIVVFVYLTVENKSLFG.

The region spanning 1-45 (MVDVKCLSDCKLQNQLEKLGFSPGPILPSTRKLYEKKLVQLLVSP) is the LEM domain. A helical; Signal-anchor for type II membrane protein transmembrane segment spans residues 152–172 (FPVGLKLAVLGIFIIVVFVYL).

As to expression, testis-specific. Isoform 6 is detected in 17 of 18 colon cancer tissues examined.

The protein resides in the membrane. The chain is LEM domain-containing protein 1 (LEMD1) from Homo sapiens (Human).